Here is a 245-residue protein sequence, read N- to C-terminus: MSQVNMRDMLKAGVHFGHQTRYWNPKMGKYIFGARNKIHIINLEKTLPMFNDALAFVERLAQGKNKIMFVGTKRSAGKIVAEQAARAGSPYVDHRWLGGMLTNYKTIRASIKRLRDLETQAEDGTFAKLTKKEALMRSRDLEKLDRSLGGIKDMGGLPDALFVIDVDHERIAITEANKLGIPVIGVVDTNSSPEGVDYIIPGNDDAIRAIELYMTSMADAIIRGRNNVAGGTEVYVEEAAAPAAE.

Belongs to the universal ribosomal protein uS2 family.

This Pseudomonas putida (strain GB-1) protein is Small ribosomal subunit protein uS2.